The chain runs to 193 residues: Achaete-scute homolog 2 (193 aa).

Disordered stretches follow at residues 1–58 (MDSR…RNER) and 128–177 (PLPR…GALS). Residues 50–102 (AAVARRNERERNRVKLVNLGFQALRQHVPHGGASKKLSKVETLRSAVEYIRAL) form the bHLH domain. The segment covering 128–152 (PLPRAPSGTPATAASPSCASSSPGR) has biased composition (low complexity).

As to quaternary structure, efficient DNA binding requires dimerization with another basic helix-loop-helix (bHLH) protein. Forms heterodimers with bHLH transcription factor TCF3. May not heterodimerise with bHLH protein HAND1. Expressed in placenta.

It is found in the nucleus. In terms of biological role, transcription factor. Binds to E-box motifs 5'-CANNTG-3' in the regulatory elements of target genes, probably as a heterodimer with another basic helix-loop-helix (bHLH) protein such as the transcription factor TCF3. May bind both open and closed chromatin, acting as a pioneer transcription factor to allow other factors to bind and activate lineage-specific genes. Required during post-implantation development for the generation of some differentiated trophoblast cell types. Transcriptional activity of ASCL2 may be antagonised in a subset of trophoblast cells by bHLH transcription factor HAND1, perhaps by competing for dimerization with other bHLH proteins. Involved in differentiation and function of follicular T-helper (Tfh) cells, thereby playing a role in germinal center responses; probably modulates expression of genes involved in Tfh cell function, such as BCL6. May also act as a suppressor of Th1-, Th2- and Th17-cell differentiation. Induces the formation of stem cells in intestinal crypts in vitro, synergistically activating transcription of target genes, such as SOX9, together with TCF4/beta-catenin. May form a bistable transcriptional switch, controlling expression of its own gene together with Wnt/R-spondin signaling, and thereby maintaining stem cell characteristics. Modulates expression of target genes, including perhaps down-regulating EGR1/Krox24 and chemokine CXCL10/Mob-1 and up-regulating CXCR4 and CDKN1C/p57kip2, in Schwann cells. May play a role in reducing proliferation of Schwann cells, perhaps acting via modulation of expression of CDKN1C. May be dispensable for blastocyst formation and later embryonic function. May be involved in the determination of neuronal precursors. In Bos taurus (Bovine), this protein is Achaete-scute homolog 2 (ASCL2).